The sequence spans 224 residues: Deoxyribose-phosphate aldolase (224 aa).

The active-site Proton donor/acceptor is Asp93. The Schiff-base intermediate with acetaldehyde role is filled by Lys159. The Proton donor/acceptor role is filled by Lys189.

The protein belongs to the DeoC/FbaB aldolase family. DeoC type 1 subfamily.

The protein resides in the cytoplasm. It catalyses the reaction 2-deoxy-D-ribose 5-phosphate = D-glyceraldehyde 3-phosphate + acetaldehyde. It participates in carbohydrate degradation; 2-deoxy-D-ribose 1-phosphate degradation; D-glyceraldehyde 3-phosphate and acetaldehyde from 2-deoxy-alpha-D-ribose 1-phosphate: step 2/2. Catalyzes a reversible aldol reaction between acetaldehyde and D-glyceraldehyde 3-phosphate to generate 2-deoxy-D-ribose 5-phosphate. In Mycobacterium bovis (strain ATCC BAA-935 / AF2122/97), this protein is Deoxyribose-phosphate aldolase.